A 735-amino-acid polypeptide reads, in one-letter code: Ion-translocating oxidoreductase complex subunit C (735 aa).

4Fe-4S ferredoxin-type domains lie at Met368–Tyr397 and Lys407–Phe436. The [4Fe-4S] cluster site is built by Cys377, Cys380, Cys383, Cys387, Cys416, Cys419, Cys422, and Cys426. The segment at Ala562–Ala713 is disordered.

It belongs to the 4Fe4S bacterial-type ferredoxin family. RnfC subfamily. The complex is composed of six subunits: RsxA, RsxB, RsxC, RsxD, RsxE and RsxG. [4Fe-4S] cluster is required as a cofactor.

The protein localises to the cell inner membrane. Part of a membrane-bound complex that couples electron transfer with translocation of ions across the membrane. Required to maintain the reduced state of SoxR. This is Ion-translocating oxidoreductase complex subunit C from Salmonella newport (strain SL254).